We begin with the raw amino-acid sequence, 678 residues long: uncharacterized protein (678 aa).

Transmembrane regions (helical) follow at residues 14-34 (LMFA…WTGL) and 180-200 (GAVI…IGGF).

Belongs to the mycobacterial PPE family.

It localises to the cell membrane. This is an uncharacterized protein from Mycobacterium tuberculosis (strain ATCC 25618 / H37Rv).